The sequence spans 162 residues: Ribosome maturation factor RimM (162 aa).

The PRC barrel domain occupies 90–161 (EDCYYEADIV…KIIIKPLEVW (72 aa)).

This sequence belongs to the RimM family. In terms of assembly, binds ribosomal protein uS19.

Its subcellular location is the cytoplasm. Functionally, an accessory protein needed during the final step in the assembly of 30S ribosomal subunit, possibly for assembly of the head region. Essential for efficient processing of 16S rRNA. May be needed both before and after RbfA during the maturation of 16S rRNA. It has affinity for free ribosomal 30S subunits but not for 70S ribosomes. The polypeptide is Ribosome maturation factor RimM (Clostridium novyi (strain NT)).